Reading from the N-terminus, the 66-residue chain is Large ribosomal subunit protein bL33c (66 aa).

In terms of assembly, component of the chloroplast large ribosomal subunit (LSU). Mature 70S chloroplast ribosomes of higher plants consist of a small (30S) and a large (50S) subunit. The 30S small subunit contains 1 molecule of ribosomal RNA (16S rRNA) and 24 different proteins. The 50S large subunit contains 3 rRNA molecules (23S, 5S and 4.5S rRNA) and 33 different proteins.

The protein resides in the plastid. Its subcellular location is the chloroplast. Its function is as follows. Component of the chloroplast ribosome (chloro-ribosome), a dedicated translation machinery responsible for the synthesis of chloroplast genome-encoded proteins, including proteins of the transcription and translation machinery and components of the photosynthetic apparatus. This Spinacia oleracea (Spinach) protein is Large ribosomal subunit protein bL33c (rpl33).